Consider the following 468-residue polypeptide: Glycosyl hydrolase family 109 protein (468 aa).

The N-terminal stretch at 1 to 19 (MVYKVFLSLCIGLALSASA) is a signal peptide. Residues 67–68 (MR), aspartate 89, 138–141 (WKTH), 158–159 (EV), and asparagine 187 contribute to the NAD(+) site. Substrate is bound by residues tyrosine 216, arginine 232, 244 to 247 (YATH), and tyrosine 322. Residue tyrosine 244 participates in NAD(+) binding.

This sequence belongs to the Gfo/Idh/MocA family. Glycosyl hydrolase 109 subfamily. Requires NAD(+) as cofactor.

Glycosidase. The protein is Glycosyl hydrolase family 109 protein of Porphyromonas gingivalis (strain ATCC BAA-308 / W83).